Consider the following 118-residue polypeptide: MAGVRQHGWRAIPAVCSEYGADTLPDRYRSDGRCLLFRQQAGISALKQELEVKTPYRAMNHPVIGVVTKADLASMEQISLVKCWLREAGAHNVLVTSAVNNNGVTELFALLHTEEGCR.

This is an uncharacterized protein from Escherichia coli O157:H7.